The primary structure comprises 275 residues: Formamidopyrimidine-DNA glycosylase (275 aa).

Residue P2 is the Schiff-base intermediate with DNA of the active site. The active-site Proton donor is E3. K59 serves as the catalytic Proton donor; for beta-elimination activity. H94 and R113 together coordinate DNA. The FPG-type zinc finger occupies 241–275; that stretch reads LVHTHAKEPCQICGTIIQKTKVNGRGTYYCPNCQN. Residue R265 is the Proton donor; for delta-elimination activity of the active site.

It belongs to the FPG family. As to quaternary structure, monomer. Zn(2+) serves as cofactor.

It carries out the reaction Hydrolysis of DNA containing ring-opened 7-methylguanine residues, releasing 2,6-diamino-4-hydroxy-5-(N-methyl)formamidopyrimidine.. The enzyme catalyses 2'-deoxyribonucleotide-(2'-deoxyribose 5'-phosphate)-2'-deoxyribonucleotide-DNA = a 3'-end 2'-deoxyribonucleotide-(2,3-dehydro-2,3-deoxyribose 5'-phosphate)-DNA + a 5'-end 5'-phospho-2'-deoxyribonucleoside-DNA + H(+). Involved in base excision repair of DNA damaged by oxidation or by mutagenic agents. Acts as a DNA glycosylase that recognizes and removes damaged bases. Has a preference for oxidized purines, such as 7,8-dihydro-8-oxoguanine (8-oxoG). Has AP (apurinic/apyrimidinic) lyase activity and introduces nicks in the DNA strand. Cleaves the DNA backbone by beta-delta elimination to generate a single-strand break at the site of the removed base with both 3'- and 5'-phosphates. The chain is Formamidopyrimidine-DNA glycosylase from Ureaplasma parvum serovar 3 (strain ATCC 700970).